Reading from the N-terminus, the 180-residue chain is Large ribosomal subunit protein uL5 (180 aa).

Belongs to the universal ribosomal protein uL5 family. As to quaternary structure, part of the 50S ribosomal subunit; part of the 5S rRNA/L5/L18/L25 subcomplex. Contacts the 5S rRNA and the P site tRNA. Forms a bridge to the 30S subunit in the 70S ribosome.

Its function is as follows. This is one of the proteins that bind and probably mediate the attachment of the 5S RNA into the large ribosomal subunit, where it forms part of the central protuberance. In the 70S ribosome it contacts protein S13 of the 30S subunit (bridge B1b), connecting the 2 subunits; this bridge is implicated in subunit movement. Contacts the P site tRNA; the 5S rRNA and some of its associated proteins might help stabilize positioning of ribosome-bound tRNAs. This Synechococcus sp. (strain JA-2-3B'a(2-13)) (Cyanobacteria bacterium Yellowstone B-Prime) protein is Large ribosomal subunit protein uL5.